The primary structure comprises 374 residues: Aminomethyltransferase (374 aa).

The protein belongs to the GcvT family. In terms of assembly, the glycine cleavage system is composed of four proteins: P, T, L and H.

The enzyme catalyses N(6)-[(R)-S(8)-aminomethyldihydrolipoyl]-L-lysyl-[protein] + (6S)-5,6,7,8-tetrahydrofolate = N(6)-[(R)-dihydrolipoyl]-L-lysyl-[protein] + (6R)-5,10-methylene-5,6,7,8-tetrahydrofolate + NH4(+). The glycine cleavage system catalyzes the degradation of glycine. This is Aminomethyltransferase from Prochlorococcus marinus (strain MIT 9303).